A 117-amino-acid polypeptide reads, in one-letter code: Immunoglobulin heavy variable 7-4-1 (117 aa).

Positions 1–19 (MDWTWRILFLVAAATGAHS) are cleaved as a signal peptide. Positions 20-44 (QVQLVQSGSELKKPGASVKVSCKAS) are framework-1. The Ig-like domain maps to 20 to 117 (QVQLVQSGSE…EDTAVYYCAR (98 aa)). A disulfide bridge connects residues cysteine 41 and cysteine 115. Residues 45–52 (GYTFTSYA) form a complementarity-determining-1 region. Positions 53-69 (MNWVRQAPGQGLEWMGW) are framework-2. Positions 70–77 (INTNTGNP) are complementarity-determining-2. The tract at residues 78–115 (TYAQGFTGRFVFSLDTSVSTAYLQICSLKAEDTAVYYC) is framework-3. The tract at residues 116–117 (AR) is complementarity-determining-3.

Immunoglobulins are composed of two identical heavy chains and two identical light chains; disulfide-linked.

It localises to the secreted. It is found in the cell membrane. V region of the variable domain of immunoglobulin heavy chains that participates in the antigen recognition. Immunoglobulins, also known as antibodies, are membrane-bound or secreted glycoproteins produced by B lymphocytes. In the recognition phase of humoral immunity, the membrane-bound immunoglobulins serve as receptors which, upon binding of a specific antigen, trigger the clonal expansion and differentiation of B lymphocytes into immunoglobulins-secreting plasma cells. Secreted immunoglobulins mediate the effector phase of humoral immunity, which results in the elimination of bound antigens. The antigen binding site is formed by the variable domain of one heavy chain, together with that of its associated light chain. Thus, each immunoglobulin has two antigen binding sites with remarkable affinity for a particular antigen. The variable domains are assembled by a process called V-(D)-J rearrangement and can then be subjected to somatic hypermutations which, after exposure to antigen and selection, allow affinity maturation for a particular antigen. The polypeptide is Immunoglobulin heavy variable 7-4-1 (Homo sapiens (Human)).